A 256-amino-acid polypeptide reads, in one-letter code: Protein FixA (256 aa).

It belongs to the ETF beta-subunit/FixA family. Heterodimer of FixA and FixB.

Its pathway is amine and polyamine metabolism; carnitine metabolism. Its function is as follows. Required for anaerobic carnitine reduction. May bring reductant to CaiA. The sequence is that of Protein FixA from Escherichia coli O139:H28 (strain E24377A / ETEC).